We begin with the raw amino-acid sequence, 107 residues long: U1-lycotoxin-Ls1m (107 aa).

A signal peptide spans 1–20 (MMKVLVVVALLVTLISYSSS). A propeptide spanning residues 21–41 (EGIDDLEADELLSLMANEQTR) is cleaved from the precursor. Disulfide bonds link C44–C59, C51–C68, C58–C86, and C70–C84.

Belongs to the neurotoxin 19 (CSTX) family. 04 (U1-Lctx) subfamily. In terms of tissue distribution, expressed by the venom gland.

It is found in the secreted. This Lycosa singoriensis (Wolf spider) protein is U1-lycotoxin-Ls1m.